Reading from the N-terminus, the 324-residue chain is tRNA N6-adenosine threonylcarbamoyltransferase (324 aa).

Residues His-107, His-111, and Tyr-127 each contribute to the Fe cation site. Substrate is bound by residues 127-131, Asp-159, Gly-172, Glu-176, and Asn-257; that span reads YVSGG. Asp-285 serves as a coordination point for Fe cation.

Belongs to the KAE1 / TsaD family. In terms of assembly, monomer. Component of the KEOPS complex that consists of Kae1, Bud32, Cgi121 and Pcc1; the whole complex dimerizes. Fe(2+) serves as cofactor.

It localises to the cytoplasm. It catalyses the reaction L-threonylcarbamoyladenylate + adenosine(37) in tRNA = N(6)-L-threonylcarbamoyladenosine(37) in tRNA + AMP + H(+). Functionally, required for the formation of a threonylcarbamoyl group on adenosine at position 37 (t(6)A37) in tRNAs that read codons beginning with adenine. Is a component of the KEOPS complex that is probably involved in the transfer of the threonylcarbamoyl moiety of threonylcarbamoyl-AMP (TC-AMP) to the N6 group of A37. Kae1 likely plays a direct catalytic role in this reaction, but requires other protein(s) of the complex to fulfill this activity. In Pyrococcus furiosus (strain ATCC 43587 / DSM 3638 / JCM 8422 / Vc1), this protein is tRNA N6-adenosine threonylcarbamoyltransferase.